Reading from the N-terminus, the 277-residue chain is Cell wall protein PGA30 (277 aa).

A signal peptide spans Met1–Ala18. Residues Asn129 and Asn178 are each glycosylated (N-linked (GlcNAc...) asparagine). The segment at Val219–Ala246 is disordered. Residues Ala234–Ala246 are compositionally biased toward polar residues. Gly253 carries the GPI-anchor amidated glycine lipid modification. Positions Gly254 to Ile277 are cleaved as a propeptide — removed in mature form.

This sequence belongs to the SRP1/TIP1 family. In terms of processing, the GPI-anchor is attached to the protein in the endoplasmic reticulum and serves to target the protein to the cell surface. There, the glucosamine-inositol phospholipid moiety is cleaved off and the GPI-modified mannoprotein is covalently attached via its lipidless GPI glycan remnant to the 1,6-beta-glucan of the outer cell wall layer.

Its subcellular location is the secreted. The protein resides in the cell wall. It localises to the membrane. In terms of biological role, component of the cell wall involved in virulence which plays a role in the relationship between C.albicans and the host. The chain is Cell wall protein PGA30 (PGA30) from Candida albicans (strain SC5314 / ATCC MYA-2876) (Yeast).